A 48-amino-acid polypeptide reads, in one-letter code: Piguamerin (48 aa).

5 cysteine pairs are disulfide-bonded: C3–C14, C8–C19, C21–C41, C26–C45, and C30–C47. Positions C19–C47 constitute an Antistasin-like domain.

The protein belongs to the protease inhibitor I15 (antistasin) family.

The protein localises to the secreted. Inhibits plasma and tissue kallikrein, and trypsin. May be involved in leech hematophagia. The chain is Piguamerin from Hirudo nipponia (Korean blood-sucking leech).